The following is a 382-amino-acid chain: Nuclear hormone receptor family member nhr-106 (382 aa).

Residues 2–78 (QTTCEICEVP…MGMMPEKVKV (77 aa)) constitute a DNA-binding region (nuclear receptor). NR C4-type zinc fingers lie at residues 5-25 (CEICEVPAHGIHFGAITCRGC) and 42-61 (CKYSSNCTNFTGKFPQCKSC). The NR LBD domain occupies 110 to 380 (DVSNLITRGL…FSNPEMFIDS (271 aa)).

Belongs to the nuclear hormone receptor family.

The protein localises to the nucleus. Functionally, orphan nuclear receptor. The polypeptide is Nuclear hormone receptor family member nhr-106 (nhr-106) (Caenorhabditis elegans).